Reading from the N-terminus, the 334-residue chain is UPF0104 membrane protein MTH_378 (334 aa).

Transmembrane regions (helical) follow at residues 7–27 (FYFFALSILLILALIIWMGPS), 33–53 (VYMADWMIIAIALLIHMGVLA), 120–140 (FFDLGIGGGLLLLAAVMVPVI), 142–162 (VIALFGAILSVLITYLIYLVN), 218–238 (VIFILSLLSWLMECLRLYLVF), 247–267 (FSAVIIIFLLANLVGILSALP), 277–297 (MAGLFVVFGVPGFLAGSIALV), and 300–320 (IISFWMVTALGAIFSSCYAGE).

Belongs to the UPF0104 family.

Its subcellular location is the cell membrane. The chain is UPF0104 membrane protein MTH_378 from Methanothermobacter thermautotrophicus (strain ATCC 29096 / DSM 1053 / JCM 10044 / NBRC 100330 / Delta H) (Methanobacterium thermoautotrophicum).